Reading from the N-terminus, the 66-residue chain is Putative antitoxin APE_0279a.1 (66 aa).

It belongs to the UPF0165 family.

Possibly the antitoxin component of a type II toxin-antitoxin (TA) system. The polypeptide is Putative antitoxin APE_0279a.1 (Aeropyrum pernix (strain ATCC 700893 / DSM 11879 / JCM 9820 / NBRC 100138 / K1)).